Here is a 287-residue protein sequence, read N- to C-terminus: 4-hydroxybenzoate octaprenyltransferase (287 aa).

A run of 6 helical transmembrane segments spans residues 30-50 (ALWI…FTVG), 89-109 (WEAV…ILPL), 133-153 (FFAI…PMAF), 158-178 (GHVP…SVAY), 199-221 (ALTF…LGIY), and 267-287 (NNWL…AGSF).

It belongs to the UbiA prenyltransferase family. It depends on Mg(2+) as a cofactor.

It localises to the cell inner membrane. The enzyme catalyses all-trans-octaprenyl diphosphate + 4-hydroxybenzoate = 4-hydroxy-3-(all-trans-octaprenyl)benzoate + diphosphate. The protein operates within cofactor biosynthesis; ubiquinone biosynthesis. In terms of biological role, catalyzes the prenylation of para-hydroxybenzoate (PHB) with an all-trans polyprenyl group. Mediates the second step in the final reaction sequence of ubiquinone-8 (UQ-8) biosynthesis, which is the condensation of the polyisoprenoid side chain with PHB, generating the first membrane-bound Q intermediate 3-octaprenyl-4-hydroxybenzoate. The sequence is that of 4-hydroxybenzoate octaprenyltransferase from Paraburkholderia phytofirmans (strain DSM 17436 / LMG 22146 / PsJN) (Burkholderia phytofirmans).